Here is a 475-residue protein sequence, read N- to C-terminus: Probable sensor histidine kinase TcrY (475 aa).

Residues 1-153 lie on the Extracellular side of the membrane; it reads MGITAATEMA…NVDATMLQML (153 aa). Residues 154 to 174 traverse the membrane as a helical segment; that stretch reads IIFGIVTVIALVAATTAGIVI. Over 175 to 475 the chain is Cytoplasmic; the sequence is IKRALAPLRR…GWQPLESSPR (301 aa). The region spanning 176 to 238 is the HAMP domain; the sequence is KRALAPLRRV…MLDHIAAALS (63 aa). One can recognise a Histidine kinase domain in the interval 253 to 466; that stretch reads DASHELRTPL…EFAVRLPLDG (214 aa). At H256 the chain carries Phosphohistidine; by autocatalysis.

In terms of assembly, homodimer. A divalent metal cation is required as a cofactor. Autophosphorylated.

Its subcellular location is the cell membrane. The enzyme catalyses ATP + protein L-histidine = ADP + protein N-phospho-L-histidine.. Its function is as follows. Member of the two-component regulatory system TcrY/TcrX. Activates TcrX by phosphorylation. The chain is Probable sensor histidine kinase TcrY (tcrY) from Mycobacterium tuberculosis (strain ATCC 25618 / H37Rv).